The sequence spans 227 residues: Cytochrome c oxidase subunit 2 (227 aa).

Topologically, residues M1–S14 are mitochondrial intermembrane. Residues P15–M45 traverse the membrane as a helical segment. Residues L46–Q59 are Mitochondrial matrix-facing. The chain crosses the membrane as a helical span at residues E60–M87. The Mitochondrial intermembrane portion of the chain corresponds to D88–A227. Cu cation contacts are provided by H161, C196, E198, C200, H204, and M207. E198 contacts Mg(2+). The residue at position 218 (Y218) is a Phosphotyrosine.

Belongs to the cytochrome c oxidase subunit 2 family. As to quaternary structure, component of the cytochrome c oxidase (complex IV, CIV), a multisubunit enzyme composed of 14 subunits. The complex is composed of a catalytic core of 3 subunits MT-CO1, MT-CO2 and MT-CO3, encoded in the mitochondrial DNA, and 11 supernumerary subunits COX4I, COX5A, COX5B, COX6A, COX6B, COX6C, COX7A, COX7B, COX7C, COX8 and NDUFA4, which are encoded in the nuclear genome. The complex exists as a monomer or a dimer and forms supercomplexes (SCs) in the inner mitochondrial membrane with NADH-ubiquinone oxidoreductase (complex I, CI) and ubiquinol-cytochrome c oxidoreductase (cytochrome b-c1 complex, complex III, CIII), resulting in different assemblies (supercomplex SCI(1)III(2)IV(1) and megacomplex MCI(2)III(2)IV(2)). Found in a complex with TMEM177, COA6, COX18, COX20, SCO1 and SCO2. Interacts with TMEM177 in a COX20-dependent manner. Interacts with COX20. Interacts with COX16. Cu cation serves as cofactor.

Its subcellular location is the mitochondrion inner membrane. The enzyme catalyses 4 Fe(II)-[cytochrome c] + O2 + 8 H(+)(in) = 4 Fe(III)-[cytochrome c] + 2 H2O + 4 H(+)(out). Its function is as follows. Component of the cytochrome c oxidase, the last enzyme in the mitochondrial electron transport chain which drives oxidative phosphorylation. The respiratory chain contains 3 multisubunit complexes succinate dehydrogenase (complex II, CII), ubiquinol-cytochrome c oxidoreductase (cytochrome b-c1 complex, complex III, CIII) and cytochrome c oxidase (complex IV, CIV), that cooperate to transfer electrons derived from NADH and succinate to molecular oxygen, creating an electrochemical gradient over the inner membrane that drives transmembrane transport and the ATP synthase. Cytochrome c oxidase is the component of the respiratory chain that catalyzes the reduction of oxygen to water. Electrons originating from reduced cytochrome c in the intermembrane space (IMS) are transferred via the dinuclear copper A center (CU(A)) of subunit 2 and heme A of subunit 1 to the active site in subunit 1, a binuclear center (BNC) formed by heme A3 and copper B (CU(B)). The BNC reduces molecular oxygen to 2 water molecules using 4 electrons from cytochrome c in the IMS and 4 protons from the mitochondrial matrix. This chain is Cytochrome c oxidase subunit 2 (MT-CO2), found in Elephas maximus (Indian elephant).